A 96-amino-acid polypeptide reads, in one-letter code: Putative pterin-4-alpha-carbinolamine dehydratase (96 aa).

This sequence belongs to the pterin-4-alpha-carbinolamine dehydratase family.

The catalysed reaction is (4aS,6R)-4a-hydroxy-L-erythro-5,6,7,8-tetrahydrobiopterin = (6R)-L-erythro-6,7-dihydrobiopterin + H2O. The sequence is that of Putative pterin-4-alpha-carbinolamine dehydratase from Paraburkholderia phytofirmans (strain DSM 17436 / LMG 22146 / PsJN) (Burkholderia phytofirmans).